The sequence spans 149 residues: Large ribosomal subunit protein uL30 (149 aa).

Belongs to the universal ribosomal protein uL30 family. In terms of assembly, part of the 50S ribosomal subunit.

This is Large ribosomal subunit protein uL30 from Methanopyrus kandleri (strain AV19 / DSM 6324 / JCM 9639 / NBRC 100938).